An 803-amino-acid chain; its full sequence is Mechanosensitive cation channel TMEM63A (803 aa).

The Extracellular segment spans residues 1 to 51 (MTDSPFLELWQSRTVAIRERLGIGDQPNDSYCYNSAKNSTVLQGVTFGGIP). The chain crosses the membrane as a helical span at residues 52–74 (TVLFIDVSCFLFLIVVFSIIRRK). Topologically, residues 75–133 (FWDYGRIALVSEGNSESRFRRLSSSSSGQQDFESELGCCSWLTAIFRLHDDQILEWCGE) are cytoplasmic. Residues 134–166 (DAIHYLSFQRHIIFLLVVVSCLSLCIILPVNLS) form a helical membrane-spanning segment. Over 167–190 (GDLLDKDPYSFGRTTIANLQTDNN) the chain is Extracellular. The helical transmembrane segment at 191–216 (LLWLHTIFAILYLILTVVFMRHHTQS) threads the bilayer. Residues 217–415 (IKYKEESLVR…CWKNLSIQGF (199 aa)) are Cytoplasmic-facing. The interval 218–413 (KYKEESLVRR…DICWKNLSIQ (196 aa)) is intracellular linker IL2; confers mechanosensitivity. The chain crosses the membrane as a helical span at residues 416–443 (RWWFQWLGINFILFVGLFFLTTPSIILS). Over 444–461 (TMDKFNVTKPIHALNDPI) the chain is Extracellular. The helical transmembrane segment at 462 to 489 (ISQFFPTLLLWSFSALLPTIVCYSTLLE) threads the bilayer. Residues 490–494 (SHWTK) lie on the Cytoplasmic side of the membrane. A helical membrane pass occupies residues 495-531 (SGENRIMMTKVYIFLIFMVLILPSLGLTSLDFFFRWL). Over 532–553 (FDKTSSEASIRLECVFLPDQGA) the chain is Extracellular. Residues 554-585 (FFVNYVIASAFIGNGMELLRLPGLILYTFRMV) form a helical membrane-spanning segment. The tract at residues 554–585 (FFVNYVIASAFIGNGMELLRLPGLILYTFRMV) is gating helix. The Cytoplasmic portion of the chain corresponds to 586–605 (MAKTAADRRNVKQHQAFEYE). The chain crosses the membrane as a helical span at residues 606 to 623 (FGAMYAWMLCVFTVIMAY). The Extracellular segment spans residues 624 to 627 (SITC). The chain crosses the membrane as a helical span at residues 628–650 (PIIVPFGLIYILLKHMVDRHNLY). The Cytoplasmic portion of the chain corresponds to 651–660 (FAYLPAKLEK). The chain crosses the membrane as a helical span at residues 661 to 688 (RIHFAAVNQALAAPILCLFWLYFFSFLR). Over 689-693 (LGLKA) the chain is Extracellular. Residues 694 to 708 (PLTLFTFLVLLLTIL) traverse the membrane as a helical segment. At 709–803 (VCLAYTCFGC…DSVAAADQED (95 aa)) the chain is on the cytoplasmic side.

Belongs to the CSC1 (TC 1.A.17) family. In terms of assembly, (Microbial infection) Interacts with H.contortus GAL-1 (via domain galectin 1).

Its subcellular location is the lysosome membrane. The protein localises to the early endosome membrane. The protein resides in the cell membrane. The catalysed reaction is Ca(2+)(in) = Ca(2+)(out). Functionally, mechanosensitive cation channel with low conductance and high activation threshold. In contrast to TMEM63B, does not show phospholipid scramblase activity. Acts as a regulator of lysosomal morphology by mediating lysosomal mechanosensitivity. Important for the baby's first breath and respiration throughout life. Upon lung inflation conducts cation currents in alveolar type 1 and 2 cells triggering lamellar body exocytosis and surfactant secretion into airspace. Also acts as an osmosensitive cation channel preferentially activated by hypotonic stress. (Microbial infection) Involved in the immunomodulatory effects exerted by H.contortus GAL-1 on host peripheral blood mononuclear cells to down-regulate host immune response. This chain is Mechanosensitive cation channel TMEM63A (TMEM63A), found in Capra hircus (Goat).